Consider the following 535-residue polypeptide: MFSLRPTALVSLSVVLFSIQETLSEQQPFVSPGWSDQWWHKSELESYTFPWPIQKVAIIGAGPSGLAAYHELDKAGYDVYLFERDTVPGGNWHYTDETPVKEPIPNADVSIGDFVPSLPPEGVRLPYEEHYEGNVSDELLRAHRGPKPIWNSLQTNAPPPLQQFRDHPWPADQPWLLPHAVLGKYIRAFASFNGINSNDVENPHISYNTRVELVEKCFTSTENGPMRTGWTLTLKQVSRTGTNTSKAVWTKENFDAVVVATGRFNAPYIPNILGLKAWADRFPDRIVHSRQFRRPQLYTNQTVLVVGAAASGVEIATDIAPNARAVYLSIRPRRISNSNSAGNPLSSRWMGRLPHNVSVVPEIKRFLPPTSAIALSSVELTNGTILTGIESIIFATGFRYTFPFLPQFHNTSLTNHDLEHKPKPIVTDGTHLRNLFLDILSIEEPTLGFMCMNIEIQNFKYAEYIAVALSKIWGNKATIPPVTRLWELNERRVMEKGGYGKYFQFLGFRGEREMIRLFTGWLNDAAASHGGRQVR.

Positions 1-24 (MFSLRPTALVSLSVVLFSIQETLS) are cleaved as a signal peptide. 60–65 (GAGPSG) lines the FAD pocket. N-linked (GlcNAc...) asparagine glycans are attached at residues Asn-134, Asn-243, and Asn-300. 307–312 (GAAASG) is a binding site for NADP(+). Residues Asn-356, Asn-382, and Asn-410 are each glycosylated (N-linked (GlcNAc...) asparagine).

The protein belongs to the FMO family. Requires FAD as cofactor.

It participates in secondary metabolite biosynthesis. Functionally, flavin-containing monooxygenase; part of the gene cluster that mediates the biosynthesis of the psychoactive metabolites ibotenic acid and muscimol. The first committed step is glutamate hydroxylation by the 2-oxoglutarate-dependent dioxygenase iboH, and the last step is decarboxylation of ibotenic acid to muscimol by the decarboxylase iboD. The order of the intermediate reactions is somewhat ambiguous. IboA likely activates the carboxylic acid at position 5 to introduce an amide bond, and the flavin monooxygenase iboF generates the N-O bond. There are several options for the latter step. One option is that iboF directly hydroxylates the amide nitrogen formed by iboA to produce a hydroxamic acid species. Another option is that iboF hydroxylates an external N-containing compound, whose resulting N-O bond is subsequently introduced into the hydroxyglutamate scaffold. The paralogous PLP-dependent cystathionine gamma-synthase-like enzymes iboG1 and iboG2 are likely involved in substitution of the OH group at position 3 by the O-N moiety. The first cyclic intermediate is most probably tricholomic acid which is likely desaturated to ibotenic acid by the cytochrome P450 monooxygenase iboC. The polypeptide is Flavin-containing monooxygenase iboF (Amanita muscaria (strain Koide BX008)).